Consider the following 318-residue polypeptide: Acyl-CoA dehydrogenase IpdE2 (318 aa).

Residues Arg210 and Gly277 each contribute to the FAD site.

Belongs to the acyl-CoA dehydrogenase family. As to quaternary structure, heterotetramer composed of 2 IpdE1 subunits and 2 IpdE2 subunits. It depends on FAD as a cofactor.

The catalysed reaction is 3-[(3aS,4S,5R,7aS)-5-hydroxy-7a-methyl-1-oxo-octahydro-1H-inden-4-yl]propanoyl-CoA + A = (2E)-3-[(3aS,4S,5R,7aS)-5-hydroxy-7a-methyl-1-oxo-octahydro-1H-inden-4-yl]prop-2-enoyl-CoA + AH2. The protein operates within steroid metabolism; cholesterol degradation. Its function is as follows. Involved in cholesterol degradation. Catalyzes the dehydrogenation of 5OH-HIP-CoA to 5OH-HIPE-CoA. Can also use octanoyl-CoA and dihydroferuloyl-CoA, with lower efficiency. Cannot use 3-oxo-4-pregnene-20-carboxyl-CoA (3-OPC-CoA). This Mycobacterium tuberculosis (strain ATCC 25618 / H37Rv) protein is Acyl-CoA dehydrogenase IpdE2.